The following is a 381-amino-acid chain: uncharacterized protein (381 aa).

A run of 11 helical transmembrane segments spans residues 10 to 29, 75 to 93, 98 to 117, 130 to 147, 157 to 179, 199 to 221, 236 to 255, 262 to 284, 289 to 311, 323 to 340, and 355 to 374; these read IFFS…INFY, IILI…LIIL, LIKI…FTSR, YLFL…NLMV, TNNT…FLHY, IELQ…WYYE, LILK…ICYI, YFAN…IHGT, NILY…ILIL, ALLS…AGAL, and LFSV…WYFI.

It is found in the cell membrane. This is an uncharacterized protein from Rickettsia prowazekii (strain Madrid E).